The following is a 3302-amino-acid chain: Xin actin-binding repeat-containing protein 2 (3302 aa).

The interval 166–204 (NDSEETLKPSSAMGTSSYTSARQSKETSTSSYSNHSLTS) is disordered. The span at 173–187 (KPSSAMGTSSYTSAR) shows a compositional bias: polar residues. Over residues 191-204 (ETSTSSYSNHSLTS) the composition is skewed to low complexity. 7 Xin repeats span residues 306–321 (AGVQ…TNDS), 341–356 (GEVQ…QPLD), 381–396 (GDVK…QPID), 418–433 (GDVC…RPLD), 456–471 (GDVK…QQLD), 496–511 (GNVK…QPLY), and 534–549 (GDVR…QPLD). Serine 565 is modified (phosphoserine). 2 Xin repeats span residues 572-587 (GEVG…QPLE) and 606-621 (IDVS…QPLD). Serine 633 carries the phosphoserine modification. Xin repeat units lie at residues 640-655 (GDVK…LPIE), 677-692 (GDVK…QRLE), 713-728 (GHVK…NNLI), 744-759 (GTVE…TPLY), and 782-797 (GDVR…RPID). At serine 813 the chain carries Phosphoserine. Xin repeat units lie at residues 820–835 (GNVK…QPLD), 859–874 (GDVK…QPME), 892–907 (GDVR…QPLD), 930–945 (GDVR…ENLD), 965–980 (GDVS…QSLD), 1004–1019 (GNVL…QPID), 1040–1055 (GDVR…FSLD), 1077–1092 (GDVK…QPLY), 1115–1130 (GDVR…KPLD), 1152–1167 (GDVS…QPLD), and 1186–1201 (GNVQ…EGGD). A Phosphoserine modification is found at serine 1210. Xin repeat units follow at residues 1217–1232 (GNVK…HSID), 1254–1269 (GDVK…QTLD), and 1289–1304 (SDVK…TPIH). Serine 1573 bears the Phosphoserine mark. 7 disordered regions span residues 1848-1882 (VSAS…VDKT), 1920-1939 (AETQ…NPAG), 1957-2002 (EKQN…APDK), 2039-2296 (YPDC…KPYM), 2311-2378 (RQQR…SKAV), 2546-2593 (YAAK…ESRV), and 2626-2687 (NFQQ…RESQ). A compositionally biased stretch (basic and acidic residues) spans 1859–1873 (KTKESENVRESKDDV). Threonine 1930 is modified (phosphothreonine). Serine 1935 carries the post-translational modification Phosphoserine. Basic and acidic residues predominate over residues 1957-1969 (EKQNSNKDMRKND). 2 stretches are compositionally biased toward pro residues: residues 2051-2062 (LPPPSPPPPPPS) and 2125-2134 (SLPPPPPTAP). Over residues 2135 to 2145 (SQPAHLLSSSV) the composition is skewed to low complexity. The residue at position 2158 (serine 2158) is a Phosphoserine. Residues 2158–2167 (SRKETLDSHQ) show a composition bias toward basic and acidic residues. The tract at residues 2181–2186 (PPTLPK) is interacts with NEBL. 3 positions are modified to phosphoserine: serine 2198, serine 2211, and serine 2252. A compositionally biased stretch (basic and acidic residues) spans 2205–2243 (ELERSLSDVEIKTTLSKDQKSSLVAESREHTEAKQEVFR). Composition is skewed to polar residues over residues 2251–2263 (LSIS…SQTV) and 2282–2292 (SFPSGSEQQSP). Residues 2303–2328 (LMIAEEKYRQQREELEKQRRESSCHS) adopt a coiled-coil conformation. Basic and acidic residues-rich tracts occupy residues 2311-2325 (RQQR…RESS) and 2333-2350 (ETQH…ELQK). Polar residues predominate over residues 2626–2635 (NFQQTQTQTS). Residues 2636 to 2659 (RIEHKELSQPYSEKKCLRDKDKQQ) show a composition bias toward basic and acidic residues. Residues 2674-2685 (TQKQSSFSSVRE) show a composition bias toward polar residues. Coiled-coil stretches lie at residues 2696 to 2724 (NILE…SNKS) and 2751 to 2777 (RVAM…EMLV). The segment at 2835 to 2934 (RQVATHSEAA…PSPPRSRSEQ (100 aa)) is disordered. Composition is skewed to polar residues over residues 2836-2850 (QVAT…NPAK) and 2891-2903 (KSEL…NNSC). Residues 2907 to 2916 (LPRRPMEHTS) show a composition bias toward basic and acidic residues. 2 positions are modified to phosphoserine: serine 2987 and serine 3225. Residues 3278–3302 (QGNLHNLSKDGLSNGVPRSRPAEFS) form a disordered region.

It belongs to the Xin family. Interacts with ACTN2. Interacts with F-actin. Interacts with NEBL (via SH3 domain). Interacts with Kcna5/Kv1.5 and Scn5a/Nav1.5; the interactions are required for normal action potential configuration in the heart.

It localises to the cell junction. Protects actin filaments from depolymerization. Required for correct morphology of cell membranes and maturation of intercalated disks of cardiomyocytes via facilitating localization of XIRP1 and CDH2 to the termini of aligned mature cardiomyocytes. Thereby required for correct postnatal heart development and growth regulation that is crucial for overall heart morphology and diastolic function. Required for normal electrical conduction in the heart including formation of the infranodal ventricular conduction system and normal action potential configuration, as a result of its interaction with the cardiac ion channel components Scn5a/Nav1.5 and Kcna5/Kv1.5. Required for regular actin filament spacing of the paracrystalline array in both inner and outer hair cells of the cochlea, thereby required for maintenance of stereocilia morphology. This chain is Xin actin-binding repeat-containing protein 2, found in Rattus norvegicus (Rat).